The sequence spans 164 residues: Cytochrome c-type biogenesis protein CcmE (164 aa).

Residues 1–8 are Cytoplasmic-facing; the sequence is MNPRRKQR. A helical; Signal-anchor for type II membrane protein membrane pass occupies residues 9–29; the sequence is LAVVGIIGFLIVSAVGLMLYA. Residues 30–164 are Periplasmic-facing; sequence LNDSIDLFYT…YESSNGAGSK (135 aa). Heme-binding residues include H128 and Y132. The disordered stretch occupies residues 142–164; the sequence is KGIKHVKPENMPTYESSNGAGSK. Residues 154–164 are compositionally biased toward polar residues; it reads TYESSNGAGSK.

The protein belongs to the CcmE/CycJ family.

Its subcellular location is the cell inner membrane. Functionally, heme chaperone required for the biogenesis of c-type cytochromes. Transiently binds heme delivered by CcmC and transfers the heme to apo-cytochromes in a process facilitated by CcmF and CcmH. The chain is Cytochrome c-type biogenesis protein CcmE from Alteromonas mediterranea (strain DSM 17117 / CIP 110805 / LMG 28347 / Deep ecotype).